We begin with the raw amino-acid sequence, 184 residues long: Flavin prenyltransferase UbiX (184 aa).

Residues 9 to 11 (GAS), Ser34, 85 to 88 (SMKT), and Arg120 contribute to the FMN site. The dimethylallyl phosphate site is built by Tyr150 and Arg166.

It belongs to the UbiX/PAD1 family.

It carries out the reaction dimethylallyl phosphate + FMNH2 = prenylated FMNH2 + phosphate. In terms of biological role, flavin prenyltransferase that catalyzes the synthesis of the prenylated FMN cofactor (prenyl-FMN) for 4-hydroxy-3-polyprenylbenzoic acid decarboxylase UbiD. The prenyltransferase is metal-independent and links a dimethylallyl moiety from dimethylallyl monophosphate (DMAP) to the flavin N5 and C6 atoms of FMN. The polypeptide is Flavin prenyltransferase UbiX (Methanocaldococcus jannaschii (strain ATCC 43067 / DSM 2661 / JAL-1 / JCM 10045 / NBRC 100440) (Methanococcus jannaschii)).